We begin with the raw amino-acid sequence, 638 residues long: Golgin subfamily A member 8S (638 aa).

Residues 1–11 are compositionally biased toward pro residues; that stretch reads MWPQARLPPHP. The disordered stretch occupies residues 1 to 84; the sequence is MWPQARLPPH…GESPTSSATL (84 aa). Over residues 50–62 the composition is skewed to polar residues; that stretch reads TNGSIHETATSGG. Coiled-coil stretches lie at residues 105 to 160, 223 to 275, and 318 to 417; these read VSQL…LNTD, LEQS…MSQE, and EAEL…QQKQ. 3 disordered regions span residues 427–453, 510–532, and 556–575; these read ALPG…PSIP, KDAA…DEAA, and AHNP…ELGA. The segment covering 434 to 446 has biased composition (basic and acidic residues); it reads GGGHLDSEGEEAP. Over residues 514–525 the composition is skewed to gly residues; the sequence is LGGGHHQAGAQG. Over residues 561 to 574 the composition is skewed to low complexity; that stretch reads DEPGPGAPAPQELG.

The protein belongs to the GOLGA8 family.

In Homo sapiens (Human), this protein is Golgin subfamily A member 8S.